The following is a 264-amino-acid chain: E3 ubiquitin-protein ligase MARCHF8 (264 aa).

Residues 15–47 (LGHSVSRSSNISKAGSPTSVSAPSSFPRTSVTP) are disordered. A compositionally biased stretch (polar residues) spans 17–47 (HSVSRSSNISKAGSPTSVSAPSSFPRTSVTP). The segment at 45 to 106 (VTPSSQDICR…ELCKFEFIME (62 aa)) adopts an RING-CH-type zinc-finger fold. Cys53, Cys56, Cys70, Cys72, His80, Cys83, Cys96, and Cys99 together coordinate Zn(2+). 2 helical membrane-spanning segments follow: residues 130–150 (CSVT…YVLI) and 170–190 (FWTK…FMYV).

The protein resides in the cytoplasmic vesicle membrane. The protein localises to the lysosome membrane. It localises to the early endosome membrane. The enzyme catalyses S-ubiquitinyl-[E2 ubiquitin-conjugating enzyme]-L-cysteine + [acceptor protein]-L-lysine = [E2 ubiquitin-conjugating enzyme]-L-cysteine + N(6)-ubiquitinyl-[acceptor protein]-L-lysine.. It participates in protein modification; protein ubiquitination. Its function is as follows. E3 ubiquitin-protein ligase that mediates ubiquitination of cd86 and MHC class II proteins, such as hla-dr alpha and beta, and promotes their subsequent endocytosis and sorting to lysosomes via multivesicular bodies. The chain is E3 ubiquitin-protein ligase MARCHF8 (marchf8) from Xenopus tropicalis (Western clawed frog).